We begin with the raw amino-acid sequence, 375 residues long: MQCALYDAGRCRSCQWIMQPIPEQLSAKTADLKNLLADFPVEEWCAPVSGPEQGFRNKAKMVVSGSVEKPLLGMLHRDGTPEDLCDCPLYPASFAPVFAALKPFIARAGLTPYNVARKRGELKYILLTESQSDGGMMLRFVLRSDTKLAQLRKALPWLHEQLPQLKVITVNIQPVHMAIMEGETEIYLTEQQALAERFNDVPLWIRPQSFFQTNPAVASQLYATARDWVRQLPVKHMWDLFCGVGGFGLHCATPDMQLTGIEIASEAIACAKQSAAELGLTRLQFQALDSTQFATAQGDVPELVLVNPPRRGIGKPLCDYLSTMAPRFIIYSSCNAQTMAKDIRELPGFRIERVQLFDMFPHTAHYEVLTLLVKQ.

[4Fe-4S] cluster is bound by residues C3, C11, C14, and C87. Residues Q212, F241, E262, and N307 each coordinate S-adenosyl-L-methionine. Catalysis depends on C334, which acts as the Nucleophile.

The protein belongs to the class I-like SAM-binding methyltransferase superfamily. RNA M5U methyltransferase family. RlmC subfamily.

The catalysed reaction is uridine(747) in 23S rRNA + S-adenosyl-L-methionine = 5-methyluridine(747) in 23S rRNA + S-adenosyl-L-homocysteine + H(+). Catalyzes the formation of 5-methyl-uridine at position 747 (m5U747) in 23S rRNA. In Escherichia coli (strain K12 / MC4100 / BW2952), this protein is 23S rRNA (uracil(747)-C(5))-methyltransferase RlmC.